The chain runs to 99 residues: CTP synthase (99 aa).

The Glutamine amidotransferase type-1 domain occupies 1 to 99; it reads TMVTKLEKDS…FIKAIIENNK (99 aa). R28 contacts L-glutamine. Residues H73 and E75 contribute to the active site.

It belongs to the CTP synthase family. As to quaternary structure, homotetramer.

It catalyses the reaction UTP + L-glutamine + ATP + H2O = CTP + L-glutamate + ADP + phosphate + 2 H(+). It carries out the reaction L-glutamine + H2O = L-glutamate + NH4(+). The enzyme catalyses UTP + NH4(+) + ATP = CTP + ADP + phosphate + 2 H(+). Its pathway is pyrimidine metabolism; CTP biosynthesis via de novo pathway; CTP from UDP: step 2/2. With respect to regulation, allosterically activated by GTP, when glutamine is the substrate; GTP has no effect on the reaction when ammonia is the substrate. The allosteric effector GTP functions by stabilizing the protein conformation that binds the tetrahedral intermediate(s) formed during glutamine hydrolysis. Inhibited by the product CTP, via allosteric rather than competitive inhibition. Functionally, catalyzes the ATP-dependent amination of UTP to CTP with either L-glutamine or ammonia as the source of nitrogen. Regulates intracellular CTP levels through interactions with the four ribonucleotide triphosphates. This chain is CTP synthase, found in Mycoplasma capricolum subsp. capripneumoniae.